Reading from the N-terminus, the 590-residue chain is Aspartate--tRNA ligase (590 aa).

An L-aspartate-binding site is contributed by glutamate 174. The interval 198-201 (QLMK) is aspartate. L-aspartate is bound at residue arginine 220. Residues 220–222 (RDE) and glutamine 229 contribute to the ATP site. Position 443 (histidine 443) interacts with L-aspartate. Glutamate 484 serves as a coordination point for ATP. Residue arginine 491 participates in L-aspartate binding. Position 536-539 (536-539 (GLDR)) interacts with ATP.

It belongs to the class-II aminoacyl-tRNA synthetase family. Type 1 subfamily. In terms of assembly, homodimer.

The protein resides in the cytoplasm. The enzyme catalyses tRNA(Asp) + L-aspartate + ATP = L-aspartyl-tRNA(Asp) + AMP + diphosphate. Its function is as follows. Catalyzes the attachment of L-aspartate to tRNA(Asp) in a two-step reaction: L-aspartate is first activated by ATP to form Asp-AMP and then transferred to the acceptor end of tRNA(Asp). The chain is Aspartate--tRNA ligase from Lactococcus lactis subsp. cremoris (strain SK11).